Consider the following 346-residue polypeptide: 4-hydroxy-2-oxovalerate aldolase (346 aa).

The 253-residue stretch at 8–260 (VTLHDMSLRD…ETGIDLYKIM (253 aa)) folds into the Pyruvate carboxyltransferase domain. Residue 16 to 17 (RD) coordinates substrate. Asp17 provides a ligand contact to Mn(2+). His20 (proton acceptor) is an active-site residue. Positions 170 and 199 each coordinate substrate. Residues His199 and His201 each contribute to the Mn(2+) site. A substrate-binding site is contributed by Tyr290.

This sequence belongs to the 4-hydroxy-2-oxovalerate aldolase family.

It catalyses the reaction (S)-4-hydroxy-2-oxopentanoate = acetaldehyde + pyruvate. This chain is 4-hydroxy-2-oxovalerate aldolase (nahM), found in Stutzerimonas stutzeri (Pseudomonas stutzeri).